Reading from the N-terminus, the 638-residue chain is Threonine--tRNA ligase (638 aa).

Residues 1 to 63 enclose the TGS domain; the sequence is MVMIQIELPD…TESGRLEIIT (63 aa). A catalytic region spans residues 245–536; the sequence is DHRRIGRELD…LIEHYAGNFP (292 aa). Zn(2+) contacts are provided by cysteine 337, histidine 388, and histidine 513.

It belongs to the class-II aminoacyl-tRNA synthetase family. Homodimer. Requires Zn(2+) as cofactor.

The protein resides in the cytoplasm. It catalyses the reaction tRNA(Thr) + L-threonine + ATP = L-threonyl-tRNA(Thr) + AMP + diphosphate + H(+). Its function is as follows. Catalyzes the attachment of threonine to tRNA(Thr) in a two-step reaction: L-threonine is first activated by ATP to form Thr-AMP and then transferred to the acceptor end of tRNA(Thr). Also edits incorrectly charged L-seryl-tRNA(Thr). The polypeptide is Threonine--tRNA ligase (Syntrophotalea carbinolica (strain DSM 2380 / NBRC 103641 / GraBd1) (Pelobacter carbinolicus)).